A 517-amino-acid polypeptide reads, in one-letter code: Optineurin (517 aa).

Coiled coils occupy residues 15 to 127 and 174 to 453; these read NLGS…DLVA and KAES…LGRH. Disordered stretches follow at residues 216 to 237 and 454 to 488; these read KLEH…TNAS and SMSE…WQQQ. Positions 222–237 are enriched in polar residues; it reads SSAQTSLPSAAETNAS. The CCHC NOA-type zinc finger occupies 487 to 517; the sequence is QQNIPDHACPKCGEVLPDLDSLQIHIMDCII. Zn(2+) contacts are provided by C495, C498, H511, and C515.

It is found in the cytoplasm. Its subcellular location is the perinuclear region. The protein resides in the golgi apparatus. It localises to the trans-Golgi network. The protein localises to the cytoplasmic vesicle. It is found in the recycling endosome. Its subcellular location is the autophagosome. Probably part of the TNF-alpha signaling pathway that can shift the equilibrium toward induction of cell death. May act by regulating membrane trafficking and cellular morphogenesis. The polypeptide is Optineurin (optn) (Danio rerio (Zebrafish)).